We begin with the raw amino-acid sequence, 157 residues long: MIKLKNFTELNSQEIELIFKWRNHPDINQFMKTKYIDFEEHLRFLKKLHQDSSKKYFLVFQDEQIIGVIDFVNITTKSCEFGLYAKPNLKGVGQILMNEIIKYAFENLKVNTLKAYVFKDNRKALKLYQQNHFTIYDEDKDFYHICLKQSDCKALPS.

One can recognise an N-acetyltransferase domain in the interval 5-152 (KNFTELNSQE…YHICLKQSDC (148 aa)).

Functionally, catalyzes the third step in the biosynthesis of pseudaminic acid, a sialic-acid-like sugar that is used to modify flagellin. Mediates N-4 acetylation of UDP-4-amino-4,6-dideoxy-beta-L-AltNAc to form UDP-2,4-diacetamido-2,4,6-trideoxy-beta-L-altropyranose. This chain is Acetyltransferase PseH (pseH), found in Campylobacter jejuni subsp. jejuni serotype O:23/36 (strain 81-176).